The sequence spans 156 residues: Transcription elongation factor GreA (156 aa).

The stretch at 6–75 forms a coiled coil; that stretch reads IYLTKEGYEK…ELENMLSKAE (70 aa).

The protein belongs to the GreA/GreB family.

Its function is as follows. Necessary for efficient RNA polymerase transcription elongation past template-encoded arresting sites. The arresting sites in DNA have the property of trapping a certain fraction of elongating RNA polymerases that pass through, resulting in locked ternary complexes. Cleavage of the nascent transcript by cleavage factors such as GreA or GreB allows the resumption of elongation from the new 3'terminus. GreA releases sequences of 2 to 3 nucleotides. This Thermosipho africanus (strain TCF52B) protein is Transcription elongation factor GreA.